The sequence spans 250 residues: Ribonuclease PH (250 aa).

Residues arginine 86 and 124-126 (GTR) each bind phosphate.

The protein belongs to the RNase PH family. In terms of assembly, homohexameric ring arranged as a trimer of dimers.

It catalyses the reaction tRNA(n+1) + phosphate = tRNA(n) + a ribonucleoside 5'-diphosphate. Its function is as follows. Phosphorolytic 3'-5' exoribonuclease that plays an important role in tRNA 3'-end maturation. Removes nucleotide residues following the 3'-CCA terminus of tRNAs; can also add nucleotides to the ends of RNA molecules by using nucleoside diphosphates as substrates, but this may not be physiologically important. Probably plays a role in initiation of 16S rRNA degradation (leading to ribosome degradation) during starvation. This chain is Ribonuclease PH, found in Exiguobacterium sibiricum (strain DSM 17290 / CCUG 55495 / CIP 109462 / JCM 13490 / 255-15).